Reading from the N-terminus, the 53-residue chain is Ferredoxin B (53 aa).

The N-terminal extension stretch occupies residues 1 to 35 (GIDPNYRSLPVVKEEQGVKIYGTYEPPTKLGIWGT). K29 carries the post-translational modification N6-methyllysine. Positions 34–53 (GTIVGVDFDLCIADGSCINA) constitute a 4Fe-4S ferredoxin-type 1 domain. [3Fe-4S] cluster-binding residues include C44 and C50.

Requires [3Fe-4S] cluster as cofactor. [4Fe-4S] cluster serves as cofactor.

In terms of biological role, ferredoxins are iron-sulfur proteins that transfer electrons in a wide variety of metabolic reactions. The polypeptide is Ferredoxin B (Sulfuracidifex metallicus (Sulfolobus metallicus)).